Reading from the N-terminus, the 551-residue chain is Glucose-6-phosphate isomerase 2 (551 aa).

The active-site Proton donor is Glu-359. Active-site residues include His-390 and Lys-514.

This sequence belongs to the GPI family.

The protein resides in the cytoplasm. The enzyme catalyses alpha-D-glucose 6-phosphate = beta-D-fructose 6-phosphate. It participates in carbohydrate biosynthesis; gluconeogenesis. It functions in the pathway carbohydrate degradation; glycolysis; D-glyceraldehyde 3-phosphate and glycerone phosphate from D-glucose: step 2/4. Its function is as follows. Catalyzes the reversible isomerization of glucose-6-phosphate to fructose-6-phosphate. This is Glucose-6-phosphate isomerase 2 from Streptomyces coelicolor (strain ATCC BAA-471 / A3(2) / M145).